A 333-amino-acid polypeptide reads, in one-letter code: DNA-directed RNA polymerase subunit alpha (333 aa).

The segment at 1–246 (MKKMVQIKYK…AHLQVIGDVK (246 aa)) is alpha N-terminal domain (alpha-NTD). Residues 262–333 (VEPSIHSVDI…YNVTLNRGEK (72 aa)) form an alpha C-terminal domain (alpha-CTD) region.

Belongs to the RNA polymerase alpha chain family. As to quaternary structure, homodimer. The RNAP catalytic core consists of 2 alpha, 1 beta, 1 beta' and 1 omega subunit. When a sigma factor is associated with the core the holoenzyme is formed, which can initiate transcription.

It catalyses the reaction RNA(n) + a ribonucleoside 5'-triphosphate = RNA(n+1) + diphosphate. Functionally, DNA-dependent RNA polymerase catalyzes the transcription of DNA into RNA using the four ribonucleoside triphosphates as substrates. The chain is DNA-directed RNA polymerase subunit alpha from Mycoplasmopsis pulmonis (strain UAB CTIP) (Mycoplasma pulmonis).